A 217-amino-acid polypeptide reads, in one-letter code: Zinc finger CCHC-type and RNA-binding motif-containing protein 1 (217 aa).

Positions 10–88 constitute an RRM domain; it reads STVYVSNLPF…RVIKASIAID (79 aa). The segment at 105-122 adopts a CCHC-type zinc-finger fold; that stretch reads SKCYECGESGHLSYACPK. Residues 120-217 are disordered; sequence CPKNMLGERE…YFSDEEELSD (98 aa). Residues 145 to 163 are compositionally biased toward acidic residues; sequence PEEEIEEVEESEDEGEDPA. A phosphoserine mark is found at serine 155, serine 210, and serine 216.

Component of the U11/U12 snRNPs that are part of the U12-type spliceosome. Interacts with ZRSR1.

The protein resides in the nucleus. It localises to the nucleoplasm. The polypeptide is Zinc finger CCHC-type and RNA-binding motif-containing protein 1 (ZCRB1) (Bos taurus (Bovine)).